We begin with the raw amino-acid sequence, 93 residues long: Exodeoxyribonuclease 7 small subunit (93 aa).

Residues 61–75 (IDDNGDEKVYEKQTD) are compositionally biased toward basic and acidic residues. Residues 61 to 93 (IDDNGDEKVYEKQTDDPSNNGGGNRGFGSADEQ) form a disordered region.

The protein belongs to the XseB family. As to quaternary structure, heterooligomer composed of large and small subunits.

It localises to the cytoplasm. The enzyme catalyses Exonucleolytic cleavage in either 5'- to 3'- or 3'- to 5'-direction to yield nucleoside 5'-phosphates.. Bidirectionally degrades single-stranded DNA into large acid-insoluble oligonucleotides, which are then degraded further into small acid-soluble oligonucleotides. This is Exodeoxyribonuclease 7 small subunit from Limosilactobacillus reuteri (strain DSM 20016) (Lactobacillus reuteri).